A 622-amino-acid chain; its full sequence is MALLQISEPGMAPAPHQRRLAVGIDLGTTNSLVAAVRNSIPEALPDDAGRVLLPSVVRYLDKGGRRIGHAAKEEAAIDPRNTIVSVKRFMGRGKAEVEGAANAPYEFVDAPGMVQIRTVDGVKSPVEVSAEILATLRQRAEDTLGDDLVGAVITVPAYFDDAQRQATKDAARLAGLNVLRLLNEPTAAAIAYGLDNGAEGLYAVYDLGGGTFDLSILKLTKGVFEVLAAGGDSALGGDDFDHLLFEHVLAQAGLEAAALAPEDVRLLLDRVRGAKEALSAAPQARVDVKLSTGEKLAQTITRDTFAALVEPLVQRTLGPTRKALRDAQVSAADIKGVVLVGGATRMPVIRDAVAKYFGQPPLVNLDPDQVVALGAAIQADLLAGNRSGGDDWLLLDVIPLSLGVETMGGLVEKIIPRNSTIPVARAQEFTTFKDGQTAMAIHVVQGERELVSDCRSLARFELRGIPPMTAGAARIRVTYQVDADGLLSVFAREQHSGVEASVVVKPSYGLGDDDIARMLEDSFKTAEVDMRARALREAQVEAQRLVEATEAALVADGDLLDASERATVDALVASLRALAPGDDADAIDAATKALAEGTDEFAARRMDKSIKRALAGRKLDEI.

It belongs to the heat shock protein 70 family.

Functionally, chaperone involved in the maturation of iron-sulfur cluster-containing proteins. Has a low intrinsic ATPase activity which is markedly stimulated by HscB. This is Chaperone protein HscA homolog from Burkholderia pseudomallei (strain 668).